The sequence spans 545 residues: CTP synthase (545 aa).

An amidoligase domain region spans residues 1–266 (MTTRYIFVTG…DDLVVKRFGL (266 aa)). A CTP-binding site is contributed by Ser-14. Residue Ser-14 coordinates UTP. ATP is bound by residues 15–20 (SLGKGI) and Asp-72. 2 residues coordinate Mg(2+): Asp-72 and Glu-140. CTP-binding positions include 147 to 149 (DIE), 187 to 192 (KTKPTQ), and Lys-223. UTP contacts are provided by residues 187–192 (KTKPTQ) and Lys-223. Residue 239–241 (KDV) coordinates ATP. The 252-residue stretch at 291–542 (VIGMVGKYIE…IAAASAHQKR (252 aa)) folds into the Glutamine amidotransferase type-1 domain. Gly-352 is a binding site for L-glutamine. Residue Cys-379 is the Nucleophile; for glutamine hydrolysis of the active site. L-glutamine contacts are provided by residues 380–383 (LGMQ), Glu-403, and Arg-470. Residues His-515 and Glu-517 contribute to the active site.

It belongs to the CTP synthase family. Homotetramer.

The enzyme catalyses UTP + L-glutamine + ATP + H2O = CTP + L-glutamate + ADP + phosphate + 2 H(+). It catalyses the reaction L-glutamine + H2O = L-glutamate + NH4(+). It carries out the reaction UTP + NH4(+) + ATP = CTP + ADP + phosphate + 2 H(+). Its pathway is pyrimidine metabolism; CTP biosynthesis via de novo pathway; CTP from UDP: step 2/2. With respect to regulation, allosterically activated by GTP, when glutamine is the substrate; GTP has no effect on the reaction when ammonia is the substrate. The allosteric effector GTP functions by stabilizing the protein conformation that binds the tetrahedral intermediate(s) formed during glutamine hydrolysis. Inhibited by the product CTP, via allosteric rather than competitive inhibition. In terms of biological role, catalyzes the ATP-dependent amination of UTP to CTP with either L-glutamine or ammonia as the source of nitrogen. Regulates intracellular CTP levels through interactions with the four ribonucleotide triphosphates. The polypeptide is CTP synthase (Shewanella baltica (strain OS223)).